The primary structure comprises 127 residues: Aspartate 1-decarboxylase (127 aa).

The active-site Schiff-base intermediate with substrate; via pyruvic acid is the serine 25. Serine 25 carries the pyruvic acid (Ser) modification. Substrate is bound at residue threonine 57. Tyrosine 58 serves as the catalytic Proton donor. Residue 73-75 participates in substrate binding; the sequence is GAA.

It belongs to the PanD family. Heterooctamer of four alpha and four beta subunits. The cofactor is pyruvate. Post-translationally, is synthesized initially as an inactive proenzyme, which is activated by self-cleavage at a specific serine bond to produce a beta-subunit with a hydroxyl group at its C-terminus and an alpha-subunit with a pyruvoyl group at its N-terminus.

The protein localises to the cytoplasm. It catalyses the reaction L-aspartate + H(+) = beta-alanine + CO2. It functions in the pathway cofactor biosynthesis; (R)-pantothenate biosynthesis; beta-alanine from L-aspartate: step 1/1. Its function is as follows. Catalyzes the pyruvoyl-dependent decarboxylation of aspartate to produce beta-alanine. In Bacillus cereus (strain B4264), this protein is Aspartate 1-decarboxylase.